A 420-amino-acid polypeptide reads, in one-letter code: MNIFNNNLHETDKDIDEIIKHEKIRQSSVIELIASENFISPAVLEAQGSILTNKYAEGYPSKRFYNGCEEVDKAENLAIERAKKLFNCKYANVQPHSGSQANQAVYLALLQPGDTILGMSLDSGGHLTHGAAPNISGKWFNAVSYSLNKETYLIDYNEIERLADLHKPKLLIAGFSAYPRNIDFAKFREIADKVGAYFMADIAHIAGLVATGEHQSPLAFAHIVTSTTHKTLRGPRGGLILSNDEEIGKKINSALFPGLQGGPLMHVIAAKAVAFQEALQPKYKSYIQQVISNAEALARILQERGYDILTGGTDNHIVLVDLRKDGITGKLAANSLDRAGITCNKNTIPFDKTSPFITSGIRLGTPACTTRGFKEKDFVLVAHMIADILDGCKNNEDNSKAEQKVLTEVTQLIKLFPFYG.

Residues Leu-121 and 125 to 127 (GHL) each bind (6S)-5,6,7,8-tetrahydrofolate. Residue Lys-230 is modified to N6-(pyridoxal phosphate)lysine. Residues Glu-246 and 354-356 (SPF) contribute to the (6S)-5,6,7,8-tetrahydrofolate site.

It belongs to the SHMT family. In terms of assembly, homodimer. Pyridoxal 5'-phosphate serves as cofactor.

Its subcellular location is the cytoplasm. The catalysed reaction is (6R)-5,10-methylene-5,6,7,8-tetrahydrofolate + glycine + H2O = (6S)-5,6,7,8-tetrahydrofolate + L-serine. It participates in one-carbon metabolism; tetrahydrofolate interconversion. Its pathway is amino-acid biosynthesis; glycine biosynthesis; glycine from L-serine: step 1/1. Catalyzes the reversible interconversion of serine and glycine with tetrahydrofolate (THF) serving as the one-carbon carrier. This reaction serves as the major source of one-carbon groups required for the biosynthesis of purines, thymidylate, methionine, and other important biomolecules. Also exhibits THF-independent aldolase activity toward beta-hydroxyamino acids, producing glycine and aldehydes, via a retro-aldol mechanism. In Rickettsia canadensis (strain McKiel), this protein is Serine hydroxymethyltransferase.